Consider the following 283-residue polypeptide: Bifunctional protein FolD (283 aa).

NADP(+) contacts are provided by residues Gly-164–Ser-166, Ser-189, and Ile-230.

Belongs to the tetrahydrofolate dehydrogenase/cyclohydrolase family. Homodimer.

It carries out the reaction (6R)-5,10-methylene-5,6,7,8-tetrahydrofolate + NADP(+) = (6R)-5,10-methenyltetrahydrofolate + NADPH. The catalysed reaction is (6R)-5,10-methenyltetrahydrofolate + H2O = (6R)-10-formyltetrahydrofolate + H(+). Its pathway is one-carbon metabolism; tetrahydrofolate interconversion. Functionally, catalyzes the oxidation of 5,10-methylenetetrahydrofolate to 5,10-methenyltetrahydrofolate and then the hydrolysis of 5,10-methenyltetrahydrofolate to 10-formyltetrahydrofolate. The polypeptide is Bifunctional protein FolD (Lacticaseibacillus paracasei (strain ATCC 334 / BCRC 17002 / CCUG 31169 / CIP 107868 / KCTC 3260 / NRRL B-441) (Lactobacillus paracasei)).